The chain runs to 453 residues: Allantoinase (453 aa).

The Zn(2+) site is built by histidine 59, histidine 61, lysine 146, histidine 186, histidine 242, and aspartate 315. Lysine 146 carries the post-translational modification N6-carboxylysine.

Belongs to the metallo-dependent hydrolases superfamily. Allantoinase family. Homotetramer. It depends on Zn(2+) as a cofactor. Carboxylation allows a single lysine to coordinate two zinc ions.

The catalysed reaction is (S)-allantoin + H2O = allantoate + H(+). The protein operates within nitrogen metabolism; (S)-allantoin degradation; allantoate from (S)-allantoin: step 1/1. Its function is as follows. Catalyzes the conversion of allantoin (5-ureidohydantoin) to allantoic acid by hydrolytic cleavage of the five-member hydantoin ring. In Salmonella gallinarum (strain 287/91 / NCTC 13346), this protein is Allantoinase.